Reading from the N-terminus, the 470-residue chain is Chromosomal replication initiator protein DnaA (470 aa).

The interval 1-79 is domain I, interacts with DnaA modulators; sequence MTDDTWGLLR…AVQRLAFKVA (79 aa). Residues 79–128 form a domain II region; it reads AANSPTRPVQPTMSEAIEEPAPLQTTVVDQLGNQEGNTSVKSPPEDLQAA. Positions 129-350 are domain III, AAA+ region; sequence PLDPRFTFDS…GALTRLFAFA (222 aa). ATP-binding residues include G173, G175, K176, and T177. Residues 351–470 form a domain IV, binds dsDNA region; sequence SLVGREIDMD…VEMLRRSLEA (120 aa).

This sequence belongs to the DnaA family. As to quaternary structure, oligomerizes as a right-handed, spiral filament on DNA at oriC.

It is found in the cytoplasm. Plays an essential role in the initiation and regulation of chromosomal replication. ATP-DnaA binds to the origin of replication (oriC) to initiate formation of the DNA replication initiation complex once per cell cycle. Binds the DnaA box (a 9 base pair repeat at the origin) and separates the double-stranded (ds)DNA. Forms a right-handed helical filament on oriC DNA; dsDNA binds to the exterior of the filament while single-stranded (ss)DNA is stabiized in the filament's interior. The ATP-DnaA-oriC complex binds and stabilizes one strand of the AT-rich DNA unwinding element (DUE), permitting loading of DNA polymerase. After initiation quickly degrades to an ADP-DnaA complex that is not apt for DNA replication. Binds acidic phospholipids. The polypeptide is Chromosomal replication initiator protein DnaA (Ruegeria sp. (strain TM1040) (Silicibacter sp.)).